Consider the following 171-residue polypeptide: Calcium-binding protein F-like (171 aa).

EF-hand domains follow at residues 6–41, 57–80, 89–124, and 130–159; these read KIFEEVQNFVQNYDLNKDGSVTSYDIYLSFLKKMNG, IDMDHDGKFTYCEIAKYCVDKAKK, AALADVEAMLLRFDKDKDKKLSQTEFLEYFKGRGYT, and DQYLKIIDLDKDGCVSVNELQEWFKKRRID. Ca(2+) is bound by residues Asp19, Asn21, Asp23, Ser25, and Asp30. Residues Asp102, Asp104, Asp106, Lys108, Glu113, Asp137, Asp139, Asp141, Cys143, and Glu148 each coordinate Ca(2+).

The sequence is that of Calcium-binding protein F-like (cbp12) from Dictyostelium discoideum (Social amoeba).